The sequence spans 61 residues: Protein transport protein Sec61 subunit beta (61 aa).

Residues 1–35 (MKRPSTQRAPATVNKGGNSMMKFYSEDAIGLKVGP) lie on the Cytoplasmic side of the membrane. Residues 36–56 (TAVLFMSLIFIAFVIILHIMG) form a helical membrane-spanning segment. Residues 57–61 (KYTRS) are Extracellular-facing.

This sequence belongs to the SEC61-beta family. The SEC61 channel-forming translocon complex.

The protein localises to the endoplasmic reticulum membrane. Its function is as follows. Component of SEC61 channel-forming translocon complex that mediates transport of signal peptide-containing precursor polypeptides across the endoplasmic reticulum (ER). Forms a ribosome receptor and a gated pore in the ER membrane, both functions required for cotranslational translocation of nascent polypeptides. The sequence is that of Protein transport protein Sec61 subunit beta (sec61b) from Dictyostelium discoideum (Social amoeba).